Consider the following 682-residue polypeptide: T-box brain protein 1 (682 aa).

2 disordered regions span residues 43–83 and 108–127; these read TDNL…RSKL and SQSS…FPYP. A compositionally biased stretch (polar residues) spans 58-68; sequence GMTNQSDTDNF. The segment covering 108 to 122 has biased composition (low complexity); sequence SQSSQPQSAATAPSA. Residues 213–393 constitute a DNA-binding region (T-box); the sequence is LWLKFHRHQT…HNPFAKGFRD (181 aa). Threonine 408 is modified (phosphothreonine). Phosphoserine is present on serine 410. Disordered regions lie at residues 447 to 483 and 588 to 658; these read PGAG…SPQR and GLAA…KSEV. Residues 462 to 472 show a composition bias toward polar residues; that stretch reads PHTNGLLSPQQ. A Phosphoserine modification is found at serine 594. Positions 619-629 are enriched in low complexity; it reads SSIKSIDSSDS. A Phosphoserine modification is found at serine 641.

In terms of assembly, homodimer. Part of a complex containing CASK, TBR1 and TSPYL2; may modulate gene expression in response to neuronal synaptic activity. Interacts with FOXP2. Interacts with FOXP1. Interacts with BCL11A. As to expression, brain.

The protein resides in the nucleus. Transcriptional repressor involved in multiple aspects of cortical development, including neuronal migration, laminar and areal identity, and axonal projection. As transcriptional repressor of FEZF2, it blocks the formation of the corticospinal (CS) tract from layer 6 projection neurons, thereby restricting the origin of CS axons specifically to layer 5 neurons. This Homo sapiens (Human) protein is T-box brain protein 1 (TBR1).